A 495-amino-acid polypeptide reads, in one-letter code: Cobyric acid synthase (495 aa).

One can recognise a GATase cobBQ-type domain in the interval 249–443; that stretch reads EININVIRLP…LHGLFDNGAW (195 aa). Cys330 functions as the Nucleophile in the catalytic mechanism. His435 is an active-site residue.

The protein belongs to the CobB/CobQ family. CobQ subfamily.

Its pathway is cofactor biosynthesis; adenosylcobalamin biosynthesis. Its function is as follows. Catalyzes amidations at positions B, D, E, and G on adenosylcobyrinic A,C-diamide. NH(2) groups are provided by glutamine, and one molecule of ATP is hydrogenolyzed for each amidation. This chain is Cobyric acid synthase, found in Gloeothece citriformis (strain PCC 7424) (Cyanothece sp. (strain PCC 7424)).